We begin with the raw amino-acid sequence, 279 residues long: D-aminoacyl-tRNA deacylase (279 aa).

The segment at 81–100 (GRKSLTVHHPGNPTEDNSLG) is disordered.

This sequence belongs to the DtdA deacylase family. Monomer. Zn(2+) is required as a cofactor.

It catalyses the reaction a D-aminoacyl-tRNA + H2O = a tRNA + a D-alpha-amino acid + H(+). The catalysed reaction is glycyl-tRNA(Ala) + H2O = tRNA(Ala) + glycine + H(+). In terms of biological role, D-aminoacyl-tRNA deacylase with broad substrate specificity. By recycling D-aminoacyl-tRNA to D-amino acids and free tRNA molecules, this enzyme counteracts the toxicity associated with the formation of D-aminoacyl-tRNA entities in vivo. In Aeropyrum pernix (strain ATCC 700893 / DSM 11879 / JCM 9820 / NBRC 100138 / K1), this protein is D-aminoacyl-tRNA deacylase.